Here is a 180-residue protein sequence, read N- to C-terminus: Transcriptional repressor NrdR (180 aa).

The segment at 3–34 (CPRCSKQEIRVLESRSAEGGQSVRRRRECMSC) is a zinc-finger region. The 91-residue stretch at 49–139 (IMVIKRDGSR…VYRQFQGIKD (91 aa)) folds into the ATP-cone domain. The interval 155–180 (LERLLQDSSASDSESSGSPDLVGEYS) is disordered. The segment covering 160–174 (QDSSASDSESSGSPD) has biased composition (low complexity).

The protein belongs to the NrdR family. It depends on Zn(2+) as a cofactor.

Negatively regulates transcription of bacterial ribonucleotide reductase nrd genes and operons by binding to NrdR-boxes. This is Transcriptional repressor NrdR from Synechococcus sp. (strain JA-2-3B'a(2-13)) (Cyanobacteria bacterium Yellowstone B-Prime).